The primary structure comprises 502 residues: Putative F-box/FBD/LRR-repeat protein At5g22610 (502 aa).

In terms of domain architecture, F-box spans 17–63 (EDLISKLPEVLLSQILSYLPTKDIVRTSVLSKRWKSVWLLIPGLDLD). 7 LRR repeats span residues 70–98 (YDTFVDFMNEFLFFSREENPCLHKLKLSI), 99–127 (QKNENDPSCVTLWTDCVARGKLQHLDVEF), 147–180 (CKTLLHLRLYRVLLGNFDQSVDSLPSLKSMCLEE), 181–206 (NVYSNEASLESLISSCRVLEDLTIVK), 208–228 (DDNVRFLRVHSQSLTSLSVGY), 238–263 (YYYDRDRGNSGLVIDAPRLKYLTFNN), and 344–373 (SVWLSSFDFLDILPKLLESCPNLKSIVLET). Residues 384–435 (VERRVSSVPECLLSSLEFVEIKNRISVDDGALEVARYFVENSVNLQKVVLRL) form the FBD domain.

This Arabidopsis thaliana (Mouse-ear cress) protein is Putative F-box/FBD/LRR-repeat protein At5g22610.